The following is a 240-amino-acid chain: UDP-2,3-diacylglucosamine hydrolase (240 aa).

5 residues coordinate Mn(2+): D8, H10, D41, N79, and H114. 79 to 80 is a binding site for substrate; the sequence is NR. The substrate site is built by D122, S160, N164, K167, and H195. Residues H195 and H197 each contribute to the Mn(2+) site.

The protein belongs to the LpxH family. The cofactor is Mn(2+).

The protein localises to the cell inner membrane. The catalysed reaction is UDP-2-N,3-O-bis[(3R)-3-hydroxytetradecanoyl]-alpha-D-glucosamine + H2O = 2-N,3-O-bis[(3R)-3-hydroxytetradecanoyl]-alpha-D-glucosaminyl 1-phosphate + UMP + 2 H(+). The protein operates within glycolipid biosynthesis; lipid IV(A) biosynthesis; lipid IV(A) from (3R)-3-hydroxytetradecanoyl-[acyl-carrier-protein] and UDP-N-acetyl-alpha-D-glucosamine: step 4/6. Functionally, hydrolyzes the pyrophosphate bond of UDP-2,3-diacylglucosamine to yield 2,3-diacylglucosamine 1-phosphate (lipid X) and UMP by catalyzing the attack of water at the alpha-P atom. Involved in the biosynthesis of lipid A, a phosphorylated glycolipid that anchors the lipopolysaccharide to the outer membrane of the cell. This is UDP-2,3-diacylglucosamine hydrolase from Escherichia coli (strain SE11).